We begin with the raw amino-acid sequence, 388 residues long: Formate-dependent phosphoribosylglycinamide formyltransferase (388 aa).

Residues 20–21 (EL) and Glu-80 contribute to the N(1)-(5-phospho-beta-D-ribosyl)glycinamide site. Residues Arg-112, Lys-153, 158–163 (SSGKGQ), 193–196 (EEFI), and Glu-201 each bind ATP. One can recognise an ATP-grasp domain in the interval 117–306 (RLAFEKLGLR…EFEIHARAIL (190 aa)). Mg(2+) contacts are provided by Glu-265 and Glu-277. N(1)-(5-phospho-beta-D-ribosyl)glycinamide-binding positions include Asp-284, Lys-352, and 359 to 360 (RR).

Belongs to the PurK/PurT family. Homodimer.

The enzyme catalyses N(1)-(5-phospho-beta-D-ribosyl)glycinamide + formate + ATP = N(2)-formyl-N(1)-(5-phospho-beta-D-ribosyl)glycinamide + ADP + phosphate + H(+). It participates in purine metabolism; IMP biosynthesis via de novo pathway; N(2)-formyl-N(1)-(5-phospho-D-ribosyl)glycinamide from N(1)-(5-phospho-D-ribosyl)glycinamide (formate route): step 1/1. Functionally, involved in the de novo purine biosynthesis. Catalyzes the transfer of formate to 5-phospho-ribosyl-glycinamide (GAR), producing 5-phospho-ribosyl-N-formylglycinamide (FGAR). Formate is provided by PurU via hydrolysis of 10-formyl-tetrahydrofolate. This Methanococcus maripaludis (strain C5 / ATCC BAA-1333) protein is Formate-dependent phosphoribosylglycinamide formyltransferase.